The chain runs to 2645 residues: Non-reducing polyketide synthase AC (2645 aa).

The N-terminal acylcarrier protein transacylase domain (SAT) stretch occupies residues alanine 73 to methionine 2366. Residue histidine 260 is the Proton donor/acceptor; for transacylase activity of the active site. The Ketosynthase family 3 (KS3) domain occupies aspartate 416–glutamate 834. Catalysis depends on for beta-ketoacyl synthase activity residues cysteine 583, histidine 718, and histidine 757. The segment at cysteine 943–serine 1252 is malonyl-CoA:ACP transacylase (MAT) domain. Positions serine 1324–aspartate 1457 are N-terminal hotdog fold. A PKS/mFAS DH domain is found at serine 1324–arginine 1637. The tract at residues phenylalanine 1330–glycine 1641 is product template (PT) domain. Histidine 1359 serves as the catalytic Proton acceptor; for dehydratase activity. The segment at asparagine 1487–arginine 1637 is C-terminal hotdog fold. Catalysis depends on aspartate 1542, which acts as the Proton donor; for dehydratase activity. The segment covering asparagine 1684–serine 1696 has biased composition (polar residues). The segment at asparagine 1684–threonine 1716 is disordered. A compositionally biased stretch (basic residues) spans lysine 1697–threonine 1706. The Carrier domain occupies glycine 1711 to arginine 1788. Serine 1748 carries the post-translational modification O-(pantetheine 4'-phosphoryl)serine. Positions glutamine 1794 to glutamate 1805 are enriched in acidic residues. Positions glutamine 1794–alanine 1816 are disordered. Tyrosine 2009 functions as the For methyltransferase activity in the catalytic mechanism. Positions glutamate 2023–threonine 2197 are methyltransferase (CMeT) domain. The interval cysteine 2269–glutamine 2573 is NADPH-binding (R) domain.

It functions in the pathway mycotoxin biosynthesis. In terms of biological role, non-reducing polyketide synthase; part of the gene cluster that mediates the biosynthesis of the selective antifungal agent ascochitine, an o-quinone methide that plays a possible protective role against other microbial competitors in nature and is considered to be important for pathogenicity of legume-associated Didymella species. The pathway probably begins with the synthesis of a keto-aldehyde intermediate by the ascochitine non-reducing polyketide synthase pksAC from successive condensations of 4 malonyl-CoA units, presumably with a simple acetyl-CoA starter unit. Release of the keto-aldehyde intermediate is consistent with the presence of the C-terminal reductive release domain. The HR-PKS (orf7) probably makes a diketide starter unit which is passed to the non-reducing polyketide synthase pksAC for further extension, producing ascochital and ascochitine. The aldehyde dehydrogenase (orf1), the 2-oxoglutarate-dependent dioxygenase (orf3) and the dehydrogenase (orf9) are probably involved in subsequent oxidations of methyl groups to the carboxylic acid of the heterocyclic ring. The ascochitine gene cluster also includes a gene encoding a short peptide (orf2) that is often found in secondary metabolite gene clusters and which function has still to be determined. The chain is Non-reducing polyketide synthase AC from Didymella fabae (Leaf and pod spot disease fungus).